Consider the following 476-residue polypeptide: Nitrosuccinate lyase (476 aa).

Fumarate-binding residues include R137, R140, and R201. S302 functions as the Proton acceptor in the catalytic mechanism. Residues K308 and N310 each coordinate fumarate. R341 serves as the catalytic Proton donor.

This sequence belongs to the class-II fumarase/aspartase family. Homotetramer.

The enzyme catalyses 2-nitrobutanedioate = fumarate + nitrite + H(+). The protein operates within antibiotic biosynthesis. Functionally, part of a gene cluster involved in the biosynthesis of cremeomycin, a light-sensitive o-diazoquinone with antibacterial and antiproliferative effects. Catalyzes the formation of nitrous acid from nitrosuccinic acid (2-nitrobutanedioate) by elimination of its nitro group. In Streptomyces cremeus, this protein is Nitrosuccinate lyase.